The following is an 88-amino-acid chain: Kunitz-type conkunitzin-B1 (88 aa).

A signal peptide spans 1–23 (MEGRRFAAVLILPICMLAPGAVA). One can recognise a BPTI/Kunitz inhibitor domain in the interval 33 to 83 (CNLPAESGTGTQSLKRFYYNSDKMQCRTFIYKGNGGNDNNFPRTYDCQKKC). 2 disulfides stabilise this stretch: C33-C83 and C58-C79. P87 carries the proline amide modification.

Belongs to the venom Kunitz-type family. Post-translationally, contains 2 disulfide bonds instead of 3, as for all Kunitz domain proteins. As to expression, expressed by the venom duct.

The protein localises to the secreted. Its function is as follows. Blocks specifically voltage-activated potassium channels (Kv) of the Shaker family. In Conus bullatus (Bubble cone), this protein is Kunitz-type conkunitzin-B1.